A 578-amino-acid polypeptide reads, in one-letter code: Probable multidrug ABC transporter ATP-binding protein YbhF (578 aa).

ABC transporter domains lie at 6–237 (ITLN…LMTS) and 330–559 (IEAK…PDPT). ATP contacts are provided by residues 40-47 (GPDGAGKT) and 362-369 (GPNGAGKS).

This sequence belongs to the ABC transporter superfamily. In terms of assembly, the complex is probably composed of two ATP-binding proteins (YbhF) and two transmembrane proteins (YbhR and YbhS).

Its function is as follows. Part of the ABC transporter complex YbhFSR that could be involved in efflux of cefoperazone. Probably responsible for energy coupling to the transport system. The sequence is that of Probable multidrug ABC transporter ATP-binding protein YbhF (ybhF) from Escherichia coli (strain K12).